The following is a 515-amino-acid chain: 2-isopropylmalate synthase (515 aa).

The region spanning 5-267 is the Pyruvate carboxyltransferase domain; that stretch reads VIIFDTTLRD…RTGINHEEIH (263 aa). Mn(2+) is bound by residues Asp-14, His-202, His-204, and Asn-238. The segment at 392-515 is regulatory domain; it reads KLNYLSVQSG…EMKQKKIATV (124 aa).

This sequence belongs to the alpha-IPM synthase/homocitrate synthase family. LeuA type 1 subfamily. Homodimer. It depends on Mn(2+) as a cofactor.

Its subcellular location is the cytoplasm. The enzyme catalyses 3-methyl-2-oxobutanoate + acetyl-CoA + H2O = (2S)-2-isopropylmalate + CoA + H(+). The protein operates within amino-acid biosynthesis; L-leucine biosynthesis; L-leucine from 3-methyl-2-oxobutanoate: step 1/4. In terms of biological role, catalyzes the condensation of the acetyl group of acetyl-CoA with 3-methyl-2-oxobutanoate (2-ketoisovalerate) to form 3-carboxy-3-hydroxy-4-methylpentanoate (2-isopropylmalate). This is 2-isopropylmalate synthase from Vibrio vulnificus (strain CMCP6).